The primary structure comprises 822 residues: MAAKPEQDCKTAAALIRAGSLIEGVESAGKDFLVWTTQGPAVKKDPDLLFSLCRVLPGSTQQTLKLQQVEPTADSQELTVQAKEVWQANPGIDPLTYGDIGGLPHTNEPCVLDFLARRYQSKVIYTTAEPLIVAVNPFQDLKNAGPDTIALYRDAPDVDKLPPHVFYASRRAMTNMHQLKKPQTIIVSGESGAGKTETTKMLMKYLATSAGGNLDLKIQTAIMAANPVLEAFGNAKTVRNNNSSRFGRFMLLDVAREGGIQHGKVVAFLLEKSRIVCQDKDERNYHIFYQFLKGAPGHMRQRYMLQPLEAYTFINPHCLDAPGIVDTEDFEQTVKSLESMNMTETETCTIWSIVSGVLLMGNAKPTGKTEAGVENAACFVGESEAALRNACSLLFLDYPSILHELTVKTTYAGSNKIESRWTVPDSEMLRASLAKGMFEQLFLWIIRKLNADIEPKGGSFDVFMGLLDIFGFEVFQNNSLEQLFINITNEVLQRNFTDIVFEKELQLYSKEGISSKKIEYTTNEKLIETLLGKGTSVLAALEDQCISPSGTDEKFVSSLASKLAGNKCFIPSKNTKSLEFTVVHTIGKVIYNADGFAFKNKDVLRPEIIEITRASTNDVVRGLFEGVKVEKGKMAKGMLIGSQFMTQLKGLMEVIQKTESHFIRCIKPNDDKVPLKWVNSKVLIQLHALSILEALHLRQLAFSYRRTFEEFAAQFRFINLGVSNKPGADAKTICVELLKSTSISADEYALGKTMVFLKPQAAKMLVRLQREALSAWEPLVGVFEGMTVLKRAKQLSTGRAVPATRICANVRRKLVQAGIKVC.

The Myosin motor domain maps to 95-770 (LTYGDIGGLP…AAKMLVRLQR (676 aa)). 189 to 196 (GESGAGKT) lines the ATP pocket. Residues 660 to 670 (SHFIRCIKPND) are actin-binding. The tract at residues 772-822 (ALSAWEPLVGVFEGMTVLKRAKQLSTGRAVPATRICANVRRKLVQAGIKVC) is tail.

Belongs to the TRAFAC class myosin-kinesin ATPase superfamily. Myosin family.

Its subcellular location is the cell membrane. The protein resides in the cytoplasm. In terms of biological role, myosins are actin-based motor molecules with ATPase activity. Unconventional myosins serve in intracellular movements. Their highly divergent tails are presumed to bind to membranous compartments, which would be moved relative to actin filaments. The sequence is that of Myosin-D from Toxoplasma gondii.